Consider the following 498-residue polypeptide: ATP synthase subunit beta, chloroplastic (498 aa).

172–179 (GGAGVGKT) lines the ATP pocket.

This sequence belongs to the ATPase alpha/beta chains family. F-type ATPases have 2 components, CF(1) - the catalytic core - and CF(0) - the membrane proton channel. CF(1) has five subunits: alpha(3), beta(3), gamma(1), delta(1), epsilon(1). CF(0) has four main subunits: a(1), b(1), b'(1) and c(9-12).

It localises to the plastid. The protein resides in the chloroplast thylakoid membrane. The enzyme catalyses ATP + H2O + 4 H(+)(in) = ADP + phosphate + 5 H(+)(out). In terms of biological role, produces ATP from ADP in the presence of a proton gradient across the membrane. The catalytic sites are hosted primarily by the beta subunits. The protein is ATP synthase subunit beta, chloroplastic of Beta vulgaris (Sugar beet).